Consider the following 289-residue polypeptide: UPF0173 metal-dependent hydrolase H16_A2129 (289 aa).

This sequence belongs to the UPF0173 family.

The chain is UPF0173 metal-dependent hydrolase H16_A2129 from Cupriavidus necator (strain ATCC 17699 / DSM 428 / KCTC 22496 / NCIMB 10442 / H16 / Stanier 337) (Ralstonia eutropha).